The chain runs to 376 residues: Erythronate-4-phosphate dehydrogenase (376 aa).

Positions 45 and 67 each coordinate substrate. An NAD(+)-binding site is contributed by Asp147. The active site involves Arg209. An NAD(+)-binding site is contributed by Asp233. Glu238 is an active-site residue. The Proton donor role is filled by His255. Gly258 contacts NAD(+). Tyr259 contributes to the substrate binding site.

This sequence belongs to the D-isomer specific 2-hydroxyacid dehydrogenase family. PdxB subfamily. In terms of assembly, homodimer.

The protein localises to the cytoplasm. The catalysed reaction is 4-phospho-D-erythronate + NAD(+) = (R)-3-hydroxy-2-oxo-4-phosphooxybutanoate + NADH + H(+). It functions in the pathway cofactor biosynthesis; pyridoxine 5'-phosphate biosynthesis; pyridoxine 5'-phosphate from D-erythrose 4-phosphate: step 2/5. Catalyzes the oxidation of erythronate-4-phosphate to 3-hydroxy-2-oxo-4-phosphonooxybutanoate. The protein is Erythronate-4-phosphate dehydrogenase of Shewanella oneidensis (strain ATCC 700550 / JCM 31522 / CIP 106686 / LMG 19005 / NCIMB 14063 / MR-1).